A 308-amino-acid chain; its full sequence is Probable plastid-lipid-associated protein 9, chloroplastic (308 aa).

Residues 1–55 (MALIQHGSVSGTSAVRLSFSSSVSPPSSSPPLSRVSLNFQSEKKSCYRRMICRAM) constitute a chloroplast transit peptide.

Belongs to the PAP/fibrillin family.

It is found in the plastid. It localises to the chloroplast. Its subcellular location is the plastoglobule. The chain is Probable plastid-lipid-associated protein 9, chloroplastic (PAP9) from Arabidopsis thaliana (Mouse-ear cress).